A 99-amino-acid chain; its full sequence is Cytochrome c oxidase subunit 4 isoform 1, mitochondrial (99 aa).

Topologically, residues 1–73 are mitochondrial matrix; it reads SVVKSEDFTL…SFAEMNRRSN (73 aa). The residue at position 4 (K4) is an N6-acetyllysine; alternate. Position 4 is an N6-succinyllysine; alternate (K4). K28 bears the N6-acetyllysine mark. A phosphoserine mark is found at S31 and S33. K35 is modified (N6-acetyllysine; alternate). Position 35 is an N6-succinyllysine; alternate (K35). K42 bears the N6-acetyllysine mark. The helical transmembrane segment at 74 to 99 threads the bilayer; the sequence is EWKTVVGTAMFFIGITALVIMWEKLY.

This sequence belongs to the cytochrome c oxidase IV family. As to quaternary structure, component of the cytochrome c oxidase (complex IV, CIV), a multisubunit enzyme composed of 14 subunits. The complex is composed of a catalytic core of 3 subunits MT-CO1, MT-CO2 and MT-CO3, encoded in the mitochondrial DNA, and 11 supernumerary subunits COX4I, COX5A, COX5B, COX6A, COX6B, COX6C, COX7A, COX7B, COX7C, COX8 and NDUFA4, which are encoded in the nuclear genome. The complex exists as a monomer or a dimer and forms supercomplexes (SCs) in the inner mitochondrial membrane with NADH-ubiquinone oxidoreductase (complex I, CI) and ubiquinol-cytochrome c oxidoreductase (cytochrome b-c1 complex, complex III, CIII), resulting in different assemblies (supercomplex SCI(1)III(2)IV(1) and megacomplex MCI(2)III(2)IV(2)). Interacts with PHB2; the interaction decreases in absence of SPHK2. Interacts with AFG1L. Interacts with ABCB7; this interaction allows the regulation of cellular iron homeostasis and cellular reactive oxygen species (ROS) levels in cardiomyocytes. Interacts with FLVCR2; this interaction occurs in the absence of heme and is disrupted upon heme binding. Interacts with IRGC.

The protein resides in the mitochondrion inner membrane. Its pathway is energy metabolism; oxidative phosphorylation. In terms of biological role, component of the cytochrome c oxidase, the last enzyme in the mitochondrial electron transport chain which drives oxidative phosphorylation. The respiratory chain contains 3 multisubunit complexes succinate dehydrogenase (complex II, CII), ubiquinol-cytochrome c oxidoreductase (cytochrome b-c1 complex, complex III, CIII) and cytochrome c oxidase (complex IV, CIV), that cooperate to transfer electrons derived from NADH and succinate to molecular oxygen, creating an electrochemical gradient over the inner membrane that drives transmembrane transport and the ATP synthase. Cytochrome c oxidase is the component of the respiratory chain that catalyzes the reduction of oxygen to water. Electrons originating from reduced cytochrome c in the intermembrane space (IMS) are transferred via the dinuclear copper A center (CU(A)) of subunit 2 and heme A of subunit 1 to the active site in subunit 1, a binuclear center (BNC) formed by heme A3 and copper B (CU(B)). The BNC reduces molecular oxygen to 2 water molecules using 4 electrons from cytochrome c in the IMS and 4 protons from the mitochondrial matrix. This is Cytochrome c oxidase subunit 4 isoform 1, mitochondrial (COX4I1) from Mandrillus sphinx (Mandrill).